The primary structure comprises 874 residues: MGVGGGPRVVLCLWCVAALLCQGVAQEVVAETTTPFATHRPEVVAEENPANPFLPFRVCGASPTGGEIFRFPLEESCPNTEDKDHIEGIALIYKTNIVPYVFNVRKYRKIMTSTTIYKGWSEDAITNQHTRSYAVPLYEVQMMDHYYQCFSAVQVNEGGHVNTYYDRDGWNETAFLKPADGLTSSITRYQSQPEVYATPRNLLWSYTTRTTVNCEVTEMSARSMKPFEFFVTSVGDTIEMSPFLKENGTEPEKILKRPHSIQLLKNYAVTKYGVGLGQADNATRFFAIFGDYSLSWKATTENSSYCDLILWKGFSNAIQTQHNSSLHFIANDITASFSTPLEEEANFNETFKCIWNNTQEEIQKKLKEVEKTHRPNGTAKVYKTTGNLYIVWQPLIQIDLLDTHAKLYNLTNATASPTSTPTTSPRRRRRDTSSVSGGGNNGDNSTKEESVAASQVQFAYDNLRKSINRVLGELSRAWCREQYRASLMWYELSKINPTSVMSAIYGRPVSAKLIGDVVSVSDCISVDQKSVFVHKNMKVPGKEDLCYTRPVVGFKFINGSELFAGQLGPRNEIVLSTSQVEVCQHSCEHYFQAGNQMYKYKDYYYVSTLNLTDIPTLHTMITLNLSLVENIDFKVIELYSKTEKRLSNVFDIETMFREYNYYTQNLNGLRKDLDDSIDHGRDSFIQTLGDIMQDLGTIGKVVVNVASGVFSLFGSIVSGVISFFKNPFGGMLLIVLIIAGVVVVYLFMTRSRSIYSAPIRMLYPGVERAAQEPGAHPVSEDQIRNILMGMHQFQQRQRAEEEARREEEVKGKRTLFEVIRDSATSVLRRRRGGGGYQRLQRDGSDDEGDYEPLRRQDGGYDDVDVEAGTADTGV.

The signal sequence occupies residues methionine 1 to alanine 25. The Virion surface portion of the chain corresponds to glutamine 26 to proline 727. 5 disulfides stabilise this stretch: cysteine 59/cysteine 523, cysteine 77/cysteine 479, cysteine 149/cysteine 214, cysteine 306/cysteine 353, and cysteine 546/cysteine 583. Residues isoleucine 116 to glutamate 122 form an involved in fusion and/or binding to host membrane region. An N-linked (GlcNAc...) asparagine; by host glycan is attached at asparagine 171. The involved in fusion and/or binding to host membrane stretch occupies residues arginine 200 to threonine 208. Residues asparagine 247, asparagine 281, asparagine 302, asparagine 323, asparagine 348, asparagine 356, asparagine 376, asparagine 409, asparagine 412, asparagine 444, asparagine 558, asparagine 610, and asparagine 624 are each glycosylated (N-linked (GlcNAc...) asparagine; by host). The tract at residues asparagine 412 to serine 450 is disordered. The hydrophobic membrane proximal region stretch occupies residues leucine 673–lysine 725. A helical transmembrane segment spans residues phenylalanine 728–methionine 748. Over threonine 749–valine 874 the chain is Intravirion. The segment at arginine 830–valine 874 is disordered. An Internalization motif motif is present at residues tyrosine 836–leucine 839.

The protein belongs to the herpesviridae glycoprotein B family. In terms of assembly, homotrimer; disulfide-linked. Binds to heparan sulfate proteoglycans. Interacts with gH/gL heterodimer. Post-translationally, a proteolytic cleavage by host furin generates two subunits that remain linked by disulfide bonds.

It is found in the virion membrane. It localises to the host cell membrane. The protein localises to the host endosome membrane. Its subcellular location is the host Golgi apparatus membrane. Its function is as follows. Envelope glycoprotein that forms spikes at the surface of virion envelope. Essential for the initial attachment to heparan sulfate moieties of the host cell surface proteoglycans. Involved in fusion of viral and cellular membranes leading to virus entry into the host cell. Following initial binding to its host receptors, membrane fusion is mediated by the fusion machinery composed at least of gB and the heterodimer gH/gL. May be involved in the fusion between the virion envelope and the outer nuclear membrane during virion egress. This Equus caballus (Horse) protein is Envelope glycoprotein B.